We begin with the raw amino-acid sequence, 517 residues long: Bifunctional purine biosynthesis protein PurH (517 aa).

Positions 1–145 (MSPLALVSVS…KNHKDVSVLV (145 aa)) constitute an MGS-like domain.

This sequence belongs to the PurH family.

The enzyme catalyses (6R)-10-formyltetrahydrofolate + 5-amino-1-(5-phospho-beta-D-ribosyl)imidazole-4-carboxamide = 5-formamido-1-(5-phospho-D-ribosyl)imidazole-4-carboxamide + (6S)-5,6,7,8-tetrahydrofolate. It carries out the reaction IMP + H2O = 5-formamido-1-(5-phospho-D-ribosyl)imidazole-4-carboxamide. It participates in purine metabolism; IMP biosynthesis via de novo pathway; 5-formamido-1-(5-phospho-D-ribosyl)imidazole-4-carboxamide from 5-amino-1-(5-phospho-D-ribosyl)imidazole-4-carboxamide (10-formyl THF route): step 1/1. Its pathway is purine metabolism; IMP biosynthesis via de novo pathway; IMP from 5-formamido-1-(5-phospho-D-ribosyl)imidazole-4-carboxamide: step 1/1. This chain is Bifunctional purine biosynthesis protein PurH, found in Prochlorococcus marinus (strain MIT 9301).